We begin with the raw amino-acid sequence, 89 residues long: Small ribosomal subunit protein uS15 (89 aa).

This sequence belongs to the universal ribosomal protein uS15 family. As to quaternary structure, part of the 30S ribosomal subunit. Forms a bridge to the 50S subunit in the 70S ribosome, contacting the 23S rRNA.

Functionally, one of the primary rRNA binding proteins, it binds directly to 16S rRNA where it helps nucleate assembly of the platform of the 30S subunit by binding and bridging several RNA helices of the 16S rRNA. Its function is as follows. Forms an intersubunit bridge (bridge B4) with the 23S rRNA of the 50S subunit in the ribosome. This Psychromonas ingrahamii (strain DSM 17664 / CCUG 51855 / 37) protein is Small ribosomal subunit protein uS15.